The primary structure comprises 161 residues: Nucleotide-binding protein NE2248 (161 aa).

Belongs to the YajQ family.

Functionally, nucleotide-binding protein. In Nitrosomonas europaea (strain ATCC 19718 / CIP 103999 / KCTC 2705 / NBRC 14298), this protein is Nucleotide-binding protein NE2248.